Here is a 392-residue protein sequence, read N- to C-terminus: Formate-dependent phosphoribosylglycinamide formyltransferase (392 aa).

N(1)-(5-phospho-beta-D-ribosyl)glycinamide is bound by residues 22–23 and glutamate 82; that span reads EL. ATP is bound by residues arginine 114, lysine 155, 160-165, 195-198, and glutamate 203; these read SSGKGQ and EGVV. The region spanning 119–308 is the ATP-grasp domain; the sequence is RLAAEELQLP…EFALHVRAFL (190 aa). Mg(2+) is bound by residues glutamate 267 and glutamate 279. Residues aspartate 286, lysine 355, and 362–363 contribute to the N(1)-(5-phospho-beta-D-ribosyl)glycinamide site; that span reads RR.

The protein belongs to the PurK/PurT family. As to quaternary structure, homodimer.

It catalyses the reaction N(1)-(5-phospho-beta-D-ribosyl)glycinamide + formate + ATP = N(2)-formyl-N(1)-(5-phospho-beta-D-ribosyl)glycinamide + ADP + phosphate + H(+). The protein operates within purine metabolism; IMP biosynthesis via de novo pathway; N(2)-formyl-N(1)-(5-phospho-D-ribosyl)glycinamide from N(1)-(5-phospho-D-ribosyl)glycinamide (formate route): step 1/1. Functionally, involved in the de novo purine biosynthesis. Catalyzes the transfer of formate to 5-phospho-ribosyl-glycinamide (GAR), producing 5-phospho-ribosyl-N-formylglycinamide (FGAR). Formate is provided by PurU via hydrolysis of 10-formyl-tetrahydrofolate. The protein is Formate-dependent phosphoribosylglycinamide formyltransferase of Shigella flexneri.